The sequence spans 261 residues: Imidazole glycerol phosphate synthase subunit HisF (261 aa).

Residues aspartate 11 and aspartate 130 contribute to the active site.

It belongs to the HisA/HisF family. Heterodimer of HisH and HisF.

The protein resides in the cytoplasm. It catalyses the reaction 5-[(5-phospho-1-deoxy-D-ribulos-1-ylimino)methylamino]-1-(5-phospho-beta-D-ribosyl)imidazole-4-carboxamide + L-glutamine = D-erythro-1-(imidazol-4-yl)glycerol 3-phosphate + 5-amino-1-(5-phospho-beta-D-ribosyl)imidazole-4-carboxamide + L-glutamate + H(+). Its pathway is amino-acid biosynthesis; L-histidine biosynthesis; L-histidine from 5-phospho-alpha-D-ribose 1-diphosphate: step 5/9. IGPS catalyzes the conversion of PRFAR and glutamine to IGP, AICAR and glutamate. The HisF subunit catalyzes the cyclization activity that produces IGP and AICAR from PRFAR using the ammonia provided by the HisH subunit. The polypeptide is Imidazole glycerol phosphate synthase subunit HisF (Heliobacterium modesticaldum (strain ATCC 51547 / Ice1)).